Consider the following 300-residue polypeptide: MKQYLITGGTGMVGSQLVNEIKKSDSHITILTRHDQISNNKKISYVNWAKSGWEHKVPQNIDVVINLAGATLNKRWTPEYKQTLMLSRIQSTQALYELFKSRNKAPKVLFNASATGYYPPDLFMSYTEVYKTLPFDFLSDIVYQWERFAQQFEQLGTRVVIGRFGIILSNEGGALQTMKLPYEYYIGGKLGSGQQWYSWIHINDLIQAILFLINNESASGPFNLTAPIPERQNLFGYTLARAMHKPHETWVPSLAMRLILGQMSTVVLDTQKVLPNKIQALGFQFKYSNLKMALEDLISK.

It belongs to the NAD(P)-dependent epimerase/dehydratase family. SDR39U1 subfamily.

In Staphylococcus aureus (strain MRSA252), this protein is Epimerase family protein SAR0825.